Consider the following 363-residue polypeptide: Flagellar P-ring protein 2 (363 aa).

An N-terminal signal peptide occupies residues 1 to 20 (MKRIVLLLMSVALFSTAAQA).

Belongs to the FlgI family. The basal body constitutes a major portion of the flagellar organelle and consists of four rings (L,P,S, and M) mounted on a central rod.

The protein resides in the periplasm. Its subcellular location is the bacterial flagellum basal body. In terms of biological role, assembles around the rod to form the L-ring and probably protects the motor/basal body from shearing forces during rotation. The chain is Flagellar P-ring protein 2 (flgI2) from Vibrio parahaemolyticus serotype O3:K6 (strain RIMD 2210633).